Here is a 242-residue protein sequence, read N- to C-terminus: Venom nerve growth factor 2 (242 aa).

The first 18 residues, 1-18 (MSMLCYTLIIAFLIGIWA), serve as a signal peptide directing secretion. Residues 19–125 (APQSEDNVPL…ALNRNIQAKR (107 aa)) constitute a propeptide that is removed on maturation. A compositionally biased stretch (basic and acidic residues) spans 47 to 66 (DLKTSRNTDQRHPAPKKADD). The interval 47-70 (DLKTSRNTDQRHPAPKKADDQELG) is disordered. 3 disulfides stabilise this stretch: Cys-139–Cys-203, Cys-181–Cys-231, and Cys-191–Cys-233.

This sequence belongs to the NGF-beta family. As to quaternary structure, homodimer; non-covalently linked. Expressed by the venom gland.

The protein localises to the secreted. In terms of biological role, nerve growth factor is important for the development and maintenance of the sympathetic and sensory nervous systems. It stimulates division and differentiation of sympathetic and embryonic sensory neurons as well as basal forebrain cholinergic neurons in the brain. Its relevance in the snake venom is not clear. However, it has been shown to inhibit metalloproteinase-dependent proteolysis of platelet glycoprotein Ib alpha, suggesting a metalloproteinase inhibition to prevent metalloprotease autodigestion and/or protection against prey proteases. Binds a lipid between the two protein chains in the homodimer. The lipid-bound form promotes histamine relase from mouse mast cells, contrary to the lipid-free form. The chain is Venom nerve growth factor 2 from Pseudechis australis (Mulga snake).